Reading from the N-terminus, the 155-residue chain is Aspartate carbamoyltransferase regulatory chain (155 aa).

4 residues coordinate Zn(2+): cysteine 112, cysteine 117, cysteine 138, and cysteine 141.

The protein belongs to the PyrI family. Contains catalytic and regulatory chains. Requires Zn(2+) as cofactor.

Functionally, involved in allosteric regulation of aspartate carbamoyltransferase. In Methanocorpusculum labreanum (strain ATCC 43576 / DSM 4855 / Z), this protein is Aspartate carbamoyltransferase regulatory chain.